The sequence spans 213 residues: Penicillin-binding protein activator LpoB (213 aa).

The N-terminal stretch at methionine 1–glycine 19 is a signal peptide. A lipid anchor (N-palmitoyl cysteine) is attached at cysteine 20. The S-diacylglycerol cysteine moiety is linked to residue cysteine 20. Positions proline 28–histidine 74 are disordered. Pro residues predominate over residues proline 36–proline 50.

The protein belongs to the LpoB family. Interacts with PBP1b.

The protein resides in the cell outer membrane. Functionally, regulator of peptidoglycan synthesis that is essential for the function of penicillin-binding protein 1B (PBP1b). The chain is Penicillin-binding protein activator LpoB from Escherichia coli O157:H7.